The chain runs to 90 residues: uncharacterized protein (90 aa).

This is an uncharacterized protein from Treponema pallidum (strain Nichols).